The primary structure comprises 80 residues: ATP synthase subunit c (80 aa).

The next 2 helical transmembrane spans lie at 11 to 31 and 53 to 73; these read MAAAVMMGLAAIGAAIGIGIL and FFVVMGLVDAIPMIAVGLGLY.

This sequence belongs to the ATPase C chain family. In terms of assembly, F-type ATPases have 2 components, F(1) - the catalytic core - and F(0) - the membrane proton channel. F(1) has five subunits: alpha(3), beta(3), gamma(1), delta(1), epsilon(1). F(0) has three main subunits: a(1), b(2) and c(10-14). The alpha and beta chains form an alternating ring which encloses part of the gamma chain. F(1) is attached to F(0) by a central stalk formed by the gamma and epsilon chains, while a peripheral stalk is formed by the delta and b chains.

It is found in the cell inner membrane. F(1)F(0) ATP synthase produces ATP from ADP in the presence of a proton or sodium gradient. F-type ATPases consist of two structural domains, F(1) containing the extramembraneous catalytic core and F(0) containing the membrane proton channel, linked together by a central stalk and a peripheral stalk. During catalysis, ATP synthesis in the catalytic domain of F(1) is coupled via a rotary mechanism of the central stalk subunits to proton translocation. In terms of biological role, key component of the F(0) channel; it plays a direct role in translocation across the membrane. A homomeric c-ring of between 10-14 subunits forms the central stalk rotor element with the F(1) delta and epsilon subunits. The sequence is that of ATP synthase subunit c from Erwinia tasmaniensis (strain DSM 17950 / CFBP 7177 / CIP 109463 / NCPPB 4357 / Et1/99).